Consider the following 976-residue polypeptide: MVSKYHRLLQQGLREEEEGVTERNMVAGGEQRHGHVDDDNAEGDADFYDQKDERRAKMWNPKHESANVSAGGKQNRSVRDCLPGSLPPVANTSTDAAVRFDRERKNAGHGVDISCVEGDGAQMGTYVSTGRSDAKAGGGSSAIGVTADDESDGNLDTDGSDASEGDEVESTTDADVYGEDDTTEGPRGGVRLYSCDACPHAVFTTHAALLAHAEEHHADLLPDHARLRRIAQKLNPVWNRALNARRNTITSWGKKIFHVAAQRDAGESKMQEAHRARAQLECVVRRWHDKARVFIFGSSVAMGVWDGTADIDFAVVDVDAMERGSWPPLEKNAVRSITELLRRVGFSFVNLEPISHARVPIIKHHASSPILTVARRDAEDVVARSIRFILNGPATREDRLLLEGSVRDAVGPTGVQQVWWNRTSDMMSATLESTTAAVRAAMCSPALASASLRTKVQPAHDECRPELYNIDFDLSFRAFGIRNSTLLRKYLLSHPCARPGAIVLKDWSKTSGVNNSVNGYFTSYAINIMWIYYLVQKGYVPYVDPLEIPESLVNYTDFDPRYTPMIDPEITNTEREELYKAAGDMLVGFFYFYSFEFDWGHNVISLNRPGITTKRMLGWHVEDVVPVASTSVSSGGGGSNVKRHPTRYELCIEDPYEENLNLGRHIGVTKSLRVRTELYRGLLSLLKEGETRSCVFAAADSSGTPAAGGKQSAALPARALFKLMALTTQAISESRRLPQSNSDNSGRIANGDNESLTEVGGGHRVEGAGVDPASCAGASLSSFGEPPIGVHEKTLESIFVEKAPMEFQLVRKVWNWHQLIHRLGYKIHRGHVMPRREVGVRCTARRDAEETTTELASGVDTTKSLRPGRGLTDTMLRDLSRGYMTLTPEWVAWSAPWVSQHLRGYSRLTTVRSAVADETPPALATVPSVVKPPTGEAVMGAMRTTRRNAAPARRVELLKLWLWRGISKVTPFKSPR.

Disordered regions lie at residues 1 to 47 (MVSK…DADF) and 129 to 185 (TGRS…TTEG). The tract at residues 1–188 (MVSKYHRLLQ…EDDTTEGPRG (188 aa)) is required for oligomerization and may contribute to the incorporation into the MPsome complex. Over residues 147-183 (ADDESDGNLDTDGSDASEGDEVESTTDADVYGEDDTT) the composition is skewed to acidic residues. The segment at 190-221 (VRLYSCDACPHAVFTTHAALLAHAEEHHADLL) adopts a C2H2-type; atypical zinc-finger fold. Residues C195, C198, H212, and H217 each contribute to the Zn(2+) site. Residues S298 and 309–312 (ADID) contribute to the UTP site. Residues D310 and D312 each contribute to the Mg(2+) site. RNA is bound at residue R358. A PAP-associated domain is found at 366-425 (ASSPILTVARRDAEDVVARSIRFILNGPATREDRLLLEGSVRDAVGPTGVQQVWWNRTSD). UTP contacts are provided by residues 480–484 (GIRNS), K505, K509, and 523–524 (SY). A Nucleotide recognition motif (NRM) motif is present at residues 652 to 661 (IEDPYEENLN). The tract at residues 700 to 976 (DSSGTPAAGG…SKVTPFKSPR (277 aa)) is important for catalytic activity and RNA binding. The segment at 732 to 755 (SESRRLPQSNSDNSGRIANGDNES) is disordered.

It belongs to the DNA polymerase type-B-like family. Oligomer. Component of the mitochondrial 3' processome (MPsome) complex composed at least of terminal uridylyltransferase KRET1/TUT1, 3'-5' exonuclease DSS1, MPSS1, MPSS2 and MPSS3. Within the complex, interacts with DSS1, MPSS1 and MPSS3. Mg(2+) serves as cofactor. Requires Mn(2+) as cofactor.

Its subcellular location is the mitochondrion. It catalyses the reaction RNA(n) + UTP = RNA(n)-3'-uridine ribonucleotide + diphosphate. Its function is as follows. Terminal uridylyltransferase which is involved in the post-transcriptional editing of mitochondrial RNA, a process involving the addition and deletion of uridine (U) nucleotides in the pre-RNA. Specifically, catalyzes the addition of Us to the 3'-hydroxyl group of guided RNA (gRNA), ribosomal RNA (rRNA) and some mRNAs. As part of the mitochondrial 3' processome (MPsome), catalyzes the primary 3' uridylation of gRNA precursors to facilitate their recognition and to induce their processive 3'-5' degradation by DSS1, and the secondary 3' uridylation of mature gRNAs. Involved in the 3' uridylylation of the long A/U tail of some edited and never-edited mRNAs. Promotes 3' uridylylation-mediated decay of some never-edited mRNAs. Does not mediate RNA-independent UTP polymerization. The protein is Terminal uridylyltransferase 1 of Trypanosoma brucei brucei.